The chain runs to 342 residues: S-adenosylmethionine:tRNA ribosyltransferase-isomerase (342 aa).

This sequence belongs to the QueA family. In terms of assembly, monomer.

The protein resides in the cytoplasm. It carries out the reaction 7-aminomethyl-7-carbaguanosine(34) in tRNA + S-adenosyl-L-methionine = epoxyqueuosine(34) in tRNA + adenine + L-methionine + 2 H(+). It functions in the pathway tRNA modification; tRNA-queuosine biosynthesis. Transfers and isomerizes the ribose moiety from AdoMet to the 7-aminomethyl group of 7-deazaguanine (preQ1-tRNA) to give epoxyqueuosine (oQ-tRNA). The chain is S-adenosylmethionine:tRNA ribosyltransferase-isomerase from Streptococcus pneumoniae (strain Hungary19A-6).